Consider the following 141-residue polypeptide: Zinc finger protein 593 homolog (141 aa).

The interval 1-32 (MGRYSGHGGTHTKKKQYKRARSTKNRAKDIDQ) is disordered. Over residues 10–25 (THTKKKQYKRARSTKN) the composition is skewed to basic residues. Residues 60-84 (NYCIHCSKHFVTNEDLQSHIKGKPH) form a C2H2-type zinc finger.

Belongs to the ZNF593/BUD20 C2H2-type zinc-finger protein family. Associates with pre-60S ribosomal particles; released from the pre-60S particle very early in the cytoplasm.

Its subcellular location is the nucleus. The protein localises to the cytoplasm. Its function is as follows. Involved in pre-60S ribosomal particles maturation by promoting the nuclear export of the 60S ribosome. This is Zinc finger protein 593 homolog from Dictyostelium discoideum (Social amoeba).